The following is a 57-amino-acid chain: MATPKRRMSRANTRSRRAQWKAARTELVGVTVAGQRHKVPRRLLKAARLGLIDLDRR.

Residues 1-19 (MATPKRRMSRANTRSRRAQ) are compositionally biased toward basic residues. The segment at 1–20 (MATPKRRMSRANTRSRRAQW) is disordered.

The protein belongs to the bacterial ribosomal protein bL32 family.

The chain is Large ribosomal subunit protein bL32 from Mycobacterium leprae (strain Br4923).